The primary structure comprises 312 residues: Ribose-phosphate pyrophosphokinase (312 aa).

ATP-binding positions include 38–40 and 97–98; these read DGE and RQ. Mg(2+)-binding residues include His-131 and Asp-170. Residue Lys-193 is part of the active site. Residues Arg-195, Asp-219, and 223 to 227 each bind D-ribose 5-phosphate; that span reads DTAGT.

Belongs to the ribose-phosphate pyrophosphokinase family. Class I subfamily. Homohexamer. It depends on Mg(2+) as a cofactor.

Its subcellular location is the cytoplasm. The catalysed reaction is D-ribose 5-phosphate + ATP = 5-phospho-alpha-D-ribose 1-diphosphate + AMP + H(+). It functions in the pathway metabolic intermediate biosynthesis; 5-phospho-alpha-D-ribose 1-diphosphate biosynthesis; 5-phospho-alpha-D-ribose 1-diphosphate from D-ribose 5-phosphate (route I): step 1/1. Its function is as follows. Involved in the biosynthesis of the central metabolite phospho-alpha-D-ribosyl-1-pyrophosphate (PRPP) via the transfer of pyrophosphoryl group from ATP to 1-hydroxyl of ribose-5-phosphate (Rib-5-P). This chain is Ribose-phosphate pyrophosphokinase, found in Leptospira interrogans serogroup Icterohaemorrhagiae serovar copenhageni (strain Fiocruz L1-130).